A 982-amino-acid chain; its full sequence is Filament-like plant protein 4 (982 aa).

Coiled-coil stretches lie at residues 39-83 (DQYT…VAKE) and 125-291 (EDRA…RKKL). The tract at residues 311 to 333 (DHRQDHRQRRSPVRPSSPLMSPM) is disordered. A compositionally biased stretch (low complexity) spans 323-333 (VRPSSPLMSPM). A coiled-coil region spans residues 345–401 (DNMQKFHKENDLLTERLLAMEEETKMLKEALAKRNSELQVSRNLCAKTANRLQTLEA). Residues 423 to 433 (QNASNPPSMAS) are compositionally biased toward polar residues. Disordered stretches follow at residues 423–466 (QNAS…AKIK) and 687–711 (QKDSSGEHYQNGCSQSSDSEIPDDC). Positions 452-475 (ELSQSNKDKANAKIKKTESANQLE) form a coiled coil. A compositionally biased stretch (basic and acidic residues) spans 457–466 (NKDKANAKIK). The segment covering 693-705 (EHYQNGCSQSSDS) has biased composition (polar residues). Residues 722–885 (ATCKFTTEEF…AECQETILLL (164 aa)) adopt a coiled-coil conformation. 2 stretches are compositionally biased toward polar residues: residues 896-910 (TEQVASSPSQEQQAL) and 918-943 (ATSTNPQDSKLSSPSDKDTPSMNTMK). The segment at 896-982 (TEQVASSPSQ…FSRFFSTKAK (87 aa)) is disordered.

It belongs to the FPP family. As to quaternary structure, interacts with WPP/MAF proteins.

This chain is Filament-like plant protein 4 (FPP4), found in Arabidopsis thaliana (Mouse-ear cress).